Reading from the N-terminus, the 429-residue chain is 3-phosphoshikimate 1-carboxyvinyltransferase (429 aa).

3 residues coordinate 3-phosphoshikimate: Lys22, Ser23, and Arg27. Lys22 serves as a coordination point for phosphoenolpyruvate. Positions 94 and 122 each coordinate phosphoenolpyruvate. 3-phosphoshikimate is bound by residues Ser167, Gln169, Asp315, and Lys342. Residue Gln169 participates in phosphoenolpyruvate binding. Asp315 acts as the Proton acceptor in catalysis. The phosphoenolpyruvate site is built by Arg346 and Arg388.

This sequence belongs to the EPSP synthase family. In terms of assembly, monomer.

The protein resides in the cytoplasm. It carries out the reaction 3-phosphoshikimate + phosphoenolpyruvate = 5-O-(1-carboxyvinyl)-3-phosphoshikimate + phosphate. It participates in metabolic intermediate biosynthesis; chorismate biosynthesis; chorismate from D-erythrose 4-phosphate and phosphoenolpyruvate: step 6/7. Catalyzes the transfer of the enolpyruvyl moiety of phosphoenolpyruvate (PEP) to the 5-hydroxyl of shikimate-3-phosphate (S3P) to produce enolpyruvyl shikimate-3-phosphate and inorganic phosphate. This is 3-phosphoshikimate 1-carboxyvinyltransferase from Geobacter metallireducens (strain ATCC 53774 / DSM 7210 / GS-15).